The primary structure comprises 265 residues: MFLIDSHCHLDLLNYNKIHTGIQDVLNKSKKKHVNVILTVSTSIENFCYLLKFIKGNRNVLLSCGIHPHYIPENKNEILKLKKYSNNEKVVAIGETGLDYYRNNDNKKLQQILFREHIKTSITLKKPLLIHTRNSINDTINILKEENSKQCIGVLHSFTEDMHSARILLNMGFYISFSGIVTFKNSKIVHETAKFVPIDRILIETDSPYLSPVPYRGIENQPAYLYDTMLYIAQLKNMSPECFAIQTTKNFLKLFNLPSYFTNMS.

Positions 7, 9, 95, 131, 156, and 206 each coordinate a divalent metal cation.

Belongs to the metallo-dependent hydrolases superfamily. TatD-type hydrolase family. The cofactor is a divalent metal cation.

This is an uncharacterized protein from Buchnera aphidicola subsp. Baizongia pistaciae (strain Bp).